The primary structure comprises 396 residues: Apolipoprotein A-IV (396 aa).

The first 20 residues, 1–20 (MFLKAVVLTLALVAVAGARA), serve as a signal peptide directing secretion. A run of 13 repeats spans residues 33 to 54 (DYFS…KSEL), 60 to 81 (ALFQ…KKLV), 82 to 103 (PFAT…EEIG), 115 to 136 (PHAN…QRLE), 137 to 158 (PYAD…RQLT), 159 to 180 (PYAQ…ASLR), 181 to 202 (PHAD…GRLT), 203 to 224 (PYAD…RSLA), 225 to 246 (PYAQ…FQMK), 247 to 268 (KNAE…QRLA), 269 to 286 (PLAE…EGLQ), 287 to 308 (KSLA…RRVE), and 309 to 330 (PYGE…QKLG). Positions 33-330 (DYFSQLSNNA…QMEQLRQKLG (298 aa)) are 13 X 22 AA approximate tandem repeats. Positions 361–396 (KESQDKTLSLPELEQQQEQQQEQQQEQVQMLAPLES) are disordered. Positions 374–389 (EQQQEQQQEQQQEQVQ) are enriched in low complexity.

It belongs to the apolipoprotein A1/A4/E family. In terms of assembly, homodimer. Phosphorylation sites are present in the extracellular medium. As to expression, synthesized primarily in the intestine and secreted in plasma.

The protein resides in the secreted. May have a role in chylomicrons and VLDL secretion and catabolism. Required for efficient activation of lipoprotein lipase by ApoC-II; potent activator of LCAT. Apoa-IV is a major component of HDL and chylomicrons. This is Apolipoprotein A-IV from Homo sapiens (Human).